The sequence spans 374 residues: Phospho-N-acetylmuramoyl-pentapeptide-transferase (374 aa).

The next 10 membrane-spanning stretches (helical) occupy residues 3–23, 52–72, 85–105, 125–145, 170–190, 201–221, 244–264, 271–291, 294–314, and 350–370; these read AVIVAVGVAFLVSLFCTPIAI, MGGVVFILATVIAYVAGHLAL, PTITALVLLGLMVFSGAVGFI, LLGQILVGAVFGVIALYFPST, IPALELTKVGAVVLFIFVVMA, LDGLATGASVMVLAAYALIAF, PLEIALIAGAAAGACVGFLWW, IFMGDTGALGLGGLIAGMAMS, TILLLPIIGGLFVIITMSVVI, and FWIIAGIGVAIALGLFYSEFL.

Belongs to the glycosyltransferase 4 family. MraY subfamily. It depends on Mg(2+) as a cofactor.

Its subcellular location is the cell membrane. The enzyme catalyses UDP-N-acetyl-alpha-D-muramoyl-L-alanyl-gamma-D-glutamyl-meso-2,6-diaminopimeloyl-D-alanyl-D-alanine + di-trans,octa-cis-undecaprenyl phosphate = di-trans,octa-cis-undecaprenyl diphospho-N-acetyl-alpha-D-muramoyl-L-alanyl-D-glutamyl-meso-2,6-diaminopimeloyl-D-alanyl-D-alanine + UMP. It functions in the pathway cell wall biogenesis; peptidoglycan biosynthesis. In terms of biological role, catalyzes the initial step of the lipid cycle reactions in the biosynthesis of the cell wall peptidoglycan: transfers peptidoglycan precursor phospho-MurNAc-pentapeptide from UDP-MurNAc-pentapeptide onto the lipid carrier undecaprenyl phosphate, yielding undecaprenyl-pyrophosphoryl-MurNAc-pentapeptide, known as lipid I. The sequence is that of Phospho-N-acetylmuramoyl-pentapeptide-transferase from Salinispora arenicola (strain CNS-205).